Reading from the N-terminus, the 378-residue chain is C-type lectin domain family 17, member A (378 aa).

The disordered stretch occupies residues 1–119 (MHNLYSITGY…PPLPCKPRNM (119 aa)). The Cytoplasmic portion of the chain corresponds to 1–172 (MHNLYSITGY…GCCQKRWMVY (172 aa)). Composition is skewed to acidic residues over residues 17–27 (MEEEEEDDDYE), 43–53 (MEEEEEDDDYE), and 69–79 (MEEEEEDDDYE). A compositionally biased stretch (pro residues) spans 86-101 (KDLPPKPGSSAPPRPP). The chain crosses the membrane as a helical; Signal-anchor for type II membrane protein span at residues 173 to 193 (LCLLVVTSLFLGCLGLTVTLI). Over 194–378 (KYQELMEELR…YWICERKCSC (185 aa)) the chain is Extracellular. N215 and N237 each carry an N-linked (GlcNAc...) asparagine glycan. 3 disulfides stabilise this stretch: C254–C265, C282–C372, and C350–C364. One can recognise a C-type lectin domain in the interval 261-373 (FEGKCYYFSP…CYKTTYWICE (113 aa)). N-linked (GlcNAc...) asparagine glycosylation occurs at N285. Residues E341, N343, E348, N360, and D361 each coordinate Ca(2+).

In terms of assembly, oligomer; disulfide-linked. Post-translationally, phosphorylated on tyrosine residues. As to expression, expressed on dividing B-cells of germinal centers in various tissues, including lymph nodes, tonsils, stomach, intestine, appendix and spleen.

It is found in the membrane. Functionally, cell surface receptor which may be involved in carbohydrate-mediated communication between cells in the germinal center. Binds glycans with terminal alpha-linked mannose or fucose residues. The sequence is that of C-type lectin domain family 17, member A (CLEC17A) from Homo sapiens (Human).